A 206-amino-acid polypeptide reads, in one-letter code: GCN5-like protein acetyltransferase Rv2170 (206 aa).

The 162-residue stretch at 44-205 folds into the N-acetyltransferase domain; sequence EHIRRRGWQA…AFAILGRTLP (162 aa). Catalysis depends on Tyr176, which acts as the Proton donor.

It belongs to the acetyltransferase family.

It carries out the reaction L-lysyl-[protein] + acetyl-CoA = N(6)-acetyl-L-lysyl-[protein] + CoA + H(+). The catalysed reaction is propanoyl-CoA + L-lysyl-[protein] = N(6)-propanoyl-L-lysyl-[protein] + CoA + H(+). It catalyses the reaction succinyl-CoA + L-lysyl-[protein] = N(6)-succinyl-L-lysyl-[protein] + CoA + H(+). In terms of biological role, acetyltransferase involved in the post-translational regulation of the central metabolic enzyme isocitrate dehydrogenase 1 (ICDH-1) through lysine acetylation. Catalyzes the acetylation of ICDH-1 at Lys-30 and Lys-129, using acetyl-CoA as a donor, leading to a reduction of ICDH-1 enzyme activity. Can also use propionyl-CoA and succinyl-CoA as donors. Cannot act on the isocitrate dehydrogenase 2 (ICDH-2). Might play a role in regulating the TCA cycle and methylcitrate cycle when M.tuberculosis utilizes fatty acid as carbon source. In addition, it can acetylate the amino group of isoniazid (INH), one of the first-line drugs used for the treatment of tuberculosis, thereby canceling out the drug toxicity. Acts by catalyzing the transfer of an acetyl group from acetyl-CoA to INH. Following acetylation, INH is broken down into isonicotinic acid and acetylhydrazine. M.smegmatis and M.tuberculosis H37Ra strains overexpressing Rv2170 are resistant to INH. Has little or no acetyltransferase activity with other antibiotics such as streptomycin, neomycin, kanamycin, amikacin, apramycin and gentamicin. The polypeptide is GCN5-like protein acetyltransferase Rv2170 (Mycobacterium tuberculosis (strain ATCC 25618 / H37Rv)).